Reading from the N-terminus, the 318-residue chain is L-lactate dehydrogenase (318 aa).

Val14, Asp35, Lys40, and Tyr66 together coordinate NAD(+). Substrate contacts are provided by residues Arg89 and 121 to 124 (NPVD). Ser144 is a binding site for NAD(+). 149–152 (DTAR) contributes to the substrate binding site. Residue His176 is the Proton acceptor of the active site. A Phosphotyrosine modification is found at Tyr220. Thr229 lines the substrate pocket.

Belongs to the LDH/MDH superfamily. LDH family. As to quaternary structure, homotetramer.

The protein localises to the cytoplasm. The enzyme catalyses (S)-lactate + NAD(+) = pyruvate + NADH + H(+). The protein operates within fermentation; pyruvate fermentation to lactate; (S)-lactate from pyruvate: step 1/1. Functionally, catalyzes the conversion of lactate to pyruvate. The protein is L-lactate dehydrogenase of Staphylococcus haemolyticus (strain JCSC1435).